The following is a 380-amino-acid chain: UDP-N-acetylglucosamine--N-acetylmuramyl-(pentapeptide) pyrophosphoryl-undecaprenol N-acetylglucosamine transferase (380 aa).

UDP-N-acetyl-alpha-D-glucosamine contacts are provided by residues 23–25, Asn137, Arg178, Ser210, Ile266, and Gln311; that span reads TGG.

The protein belongs to the glycosyltransferase 28 family. MurG subfamily.

It is found in the cell inner membrane. The catalysed reaction is di-trans,octa-cis-undecaprenyl diphospho-N-acetyl-alpha-D-muramoyl-L-alanyl-D-glutamyl-meso-2,6-diaminopimeloyl-D-alanyl-D-alanine + UDP-N-acetyl-alpha-D-glucosamine = di-trans,octa-cis-undecaprenyl diphospho-[N-acetyl-alpha-D-glucosaminyl-(1-&gt;4)]-N-acetyl-alpha-D-muramoyl-L-alanyl-D-glutamyl-meso-2,6-diaminopimeloyl-D-alanyl-D-alanine + UDP + H(+). It functions in the pathway cell wall biogenesis; peptidoglycan biosynthesis. In terms of biological role, cell wall formation. Catalyzes the transfer of a GlcNAc subunit on undecaprenyl-pyrophosphoryl-MurNAc-pentapeptide (lipid intermediate I) to form undecaprenyl-pyrophosphoryl-MurNAc-(pentapeptide)GlcNAc (lipid intermediate II). This is UDP-N-acetylglucosamine--N-acetylmuramyl-(pentapeptide) pyrophosphoryl-undecaprenol N-acetylglucosamine transferase from Bacteroides fragilis (strain ATCC 25285 / DSM 2151 / CCUG 4856 / JCM 11019 / LMG 10263 / NCTC 9343 / Onslow / VPI 2553 / EN-2).